Consider the following 310-residue polypeptide: UPF0761 membrane protein VF_0100 (310 aa).

6 consecutive transmembrane segments (helical) span residues 34 to 54 (YMAY…LSVL), 97 to 117 (MTAV…SSID), 136 to 156 (FSLY…SLAA), 178 to 198 (LLGW…YLLV), 207 to 227 (HALI…VGFA), and 242 to 262 (ALAA…IVLI).

Belongs to the UPF0761 family.

It localises to the cell inner membrane. The sequence is that of UPF0761 membrane protein VF_0100 from Aliivibrio fischeri (strain ATCC 700601 / ES114) (Vibrio fischeri).